The sequence spans 122 residues: uncharacterized protein (122 aa).

Residues 93 to 113 (ILRICIVFLSLKIYTLTLVII) form a helical membrane-spanning segment.

It localises to the membrane. This is an uncharacterized protein from Saccharomyces cerevisiae (strain ATCC 204508 / S288c) (Baker's yeast).